We begin with the raw amino-acid sequence, 238 residues long: Opacity protein opA68 (238 aa).

Residue Ala1 is a signal peptide. Positions 88–109 (NLQRRTSNGNRRDRKTENQENG) are disordered.

The protein belongs to the opacity porin family.

It is found in the cell outer membrane. Its function is as follows. Implicated in a number of adherence functions. OPA proteins are implicated in pathogenesis and are subject to phase variation. The protein is Opacity protein opA68 of Neisseria gonorrhoeae.